We begin with the raw amino-acid sequence, 1634 residues long: MTSAQCPALACVMSPLRFWGPWPLLMWQLLWLLVKEAQPLEWVKDPLQLTSNPLGPPEPWSSHSSHFPRESPHAPTLPADPWDFDHLGPSASSEMPAPPQESTENLVPFLDTWDSAGELPLEPEQFLASQQDLKDKLSPQERLPVSPKKLKKDPAQRWSLAEIIGIIHQLSTPQSQKQTLQNEYSSTDTPYPGSLPPELRVKSDEPPGPSEQVGPSQFHLEPETQNPETLEDIQSSSLQQEAPAQLPQLLEEEPSSMQQEAPALPPESSMESLTLPNHEVSVQPPGEDQAYYHLPNITVKPADVEVTITSEPTNETESSQAQQETPIQFPEEVEPSATQQEAPIEPPVPPMEHELSISEQQQPVQPSESSREVESSPTQQETPGQPPEHHEVTVSPPGHHQTHHLASPSVSVKPPDVQLTIAAEPSAEVGTSLVHQEATTRLSGSGNDVEPPAIQHGGPPLLPESSEEAGPLAVQQETSFQSPEPINNENPSPTQQEAAAEHPQTAEEGESSLTHQEAPAQTPEFPNVVVAQPPEHSHLTQATVQPLDLGFTITPESMTEVELSPTMKETPTQPPKKVVPQLRVYQGVTNPTPGQDQAQHPVSPSVTVQLLDLGLTITPEPTTEVGHSTPPKRTIVSPKHPEVTLPHPDQVQTQHSHLTRATVQPLDLGFTITPKSMTEVEPSTALMTTAPPPGHPEVTLPPSDKGQAQHSHLTQATVQPLDLELTITTKPTTEVKPSPTTEETSTQLPDLGLAIIPEPTTETGHSTALEKTTAPRPDRVQTLHRSLTEVTGPPTELEPAQDSLVQSESYTQNKALTAPEEHKASTSTNICELCTCGDEMLSCIDLNPEQRLRQVPVPEPNTHNGTFTILNFQGNYISYIDGNVWKAYSWTEKLILRENNLTELHKDSFEGLLSLQYLDLSCNKIQSIERHTFEPLPFLKFINLSCNVITELSFGTFQAWHGMQFLHKLILNHNPLTTVEDPYLFKLPALKYLDMGTTLVPLTTLKNILMMTVELEKLIVPSHMACCLCQFKNSIEAVCKTVKLHCNSACLTNTTHCPEEASVGNPEGAFMKVLQARKNYTSTELIIEPEEPSDSSGINLSGFGSEQLDTNDESDVTSTLSYILPYFSAVNLDVKSLLLPFIKLPTTGNSLAKIQTVGKNRQRLNRVLMGPRSIQKRHFKEVGRQSIRREQGAQASVENTAEEKRLGSPAPRELKQPHTQQGPEKLAGNAVYTKPSFTQEHKAAVSVLKPFSKGAPSTSSPAKALPQVRDRWKDLTHAISILESAKARVTNMKTSKPIVHSRKKYRFHKTRSRMTHRTPKVKKSPKVRKKSYLSRLMLSNRLPFSAAKSLINSPSQGAFSSLRDLSPQENPFLEVSAPSEHFIENNNTKDTTARNAFEENVFMENTNMPEGTISENTNYNHPPEADSAGTAFNLGPTVKQTETKWEYNNVGTDLSPEPKSFNYPLLSSPGDQFEIQLTQQLQSVIPNNNVRRLIAHVIRTLKMDCSGAHVQVTCAKLVSRTGHLMKLLSGQQEVKASKIEWDTDQWKTENYINESTEAQSEQKEKSLEFTKELPGYGYTKKLILALIVTGILTILIILLCLIEICCHRRSLQEDEEGFSRDSEAPTEEESEALP.

A signal peptide spans 1–35 (MTSAQCPALACVMSPLRFWGPWPLLMWQLLWLLVK). Topologically, residues 36-1581 (EAQPLEWVKD…ELPGYGYTKK (1546 aa)) are extracellular. Disordered regions lie at residues 53 to 104 (PLGP…ESTE), 129 to 154 (SQQD…KKDP), 172 to 531 (TPQS…VVVA), 619 to 642 (PEPT…KHPE), and 758 to 777 (EPTT…APRP). An LRR 1 repeat occupies 137-160 (LSPQERLPVSPKKLKKDPAQRWSL). Composition is skewed to polar residues over residues 172 to 189 (TPQS…STDT) and 223 to 237 (ETQN…QSSS). LRR repeat units follow at residues 230–253 (LEDI…LEEE) and 267–290 (ESSM…EDQA). Residues 238–249 (LQQEAPAQLPQL) are compositionally biased toward low complexity. The N-linked (GlcNAc...) asparagine glycan is linked to asparagine 296. The span at 307–326 (TITSEPTNETESSQAQQETP) shows a compositional bias: polar residues. Positions 358 to 368 (SEQQQPVQPSE) are enriched in low complexity. The span at 433-446 (LVHQEATTRLSGSG) shows a compositional bias: polar residues. Low complexity predominate over residues 482 to 493 (SPEPINNENPSP). A compositionally biased stretch (polar residues) spans 760 to 770 (TTETGHSTALE). LRR repeat units follow at residues 864-887 (NGTF…VWKA), 888-911 (YSWT…SFEG), 912-935 (LLSL…TFEP), 937-959 (PFLK…TFQA), 963-987 (MQFL…LFKL), and 1002-1027 (LTTL…MACC). N-linked (GlcNAc...) asparagine glycosylation occurs at asparagine 1079. 2 LRR repeats span residues 1124–1146 (LPYF…KLPT) and 1151–1176 (LAKI…SIQK). Composition is skewed to basic and acidic residues over residues 1181–1191 (EVGRQSIRREQ) and 1201–1216 (AEEK…ELKQ). Disordered stretches follow at residues 1181 to 1227 (EVGR…EKLA) and 1306 to 1329 (RFHK…KVRK). The LRR 12 repeat unit spans residues 1359-1384 (FSSLRDLSPQENPFLEVSAPSEHFIE). A helical transmembrane segment spans residues 1582–1602 (LILALIVTGILTILIILLCLI). The Cytoplasmic portion of the chain corresponds to 1603–1634 (EICCHRRSLQEDEEGFSRDSEAPTEEESEALP). Residues 1614 to 1634 (DEEGFSRDSEAPTEEESEALP) are disordered. Acidic residues predominate over residues 1624–1634 (APTEEESEALP).

Belongs to the LRRC37A family.

The protein localises to the membrane. The chain is Leucine-rich repeat-containing protein 37A3 (LRRC37A3) from Homo sapiens (Human).